A 1024-amino-acid chain; its full sequence is Beta-galactosidase (1024 aa).

The substrate site is built by N103 and D202. Residue D202 coordinates Na(+). Mg(2+)-binding residues include E417, H419, and E462. Residues E462 and 538-541 (EYAH) contribute to the substrate site. E462 serves as the catalytic Proton donor. The active-site Nucleophile is E538. N598 is a binding site for Mg(2+). The Na(+) site is built by F602 and N605. N605 and W1000 together coordinate substrate.

The protein belongs to the glycosyl hydrolase 2 family. As to quaternary structure, homotetramer. Requires Mg(2+) as cofactor. The cofactor is Na(+).

It catalyses the reaction Hydrolysis of terminal non-reducing beta-D-galactose residues in beta-D-galactosides.. This chain is Beta-galactosidase, found in Escherichia coli O139:H28 (strain E24377A / ETEC).